Consider the following 176-residue polypeptide: Ribosome rescue factor SmrB (176 aa).

Residues 98–173 form the Smr domain; sequence LDLHGLNQYQ…NDAAIMVIIE (76 aa).

Belongs to the SmrB family. Associates with collided ribosomes, but not with correctly translating polysomes.

In terms of biological role, acts as a ribosome collision sensor. Detects stalled/collided disomes (pairs of ribosomes where the leading ribosome is stalled and a second ribosome has collided with it) and endonucleolytically cleaves mRNA at the 5' boundary of the stalled ribosome. Stalled/collided disomes form a new interface (primarily via the 30S subunits) that binds SmrB. Cleaved mRNA becomes available for tmRNA ligation, leading to ribosomal subunit dissociation and rescue of stalled ribosomes. The chain is Ribosome rescue factor SmrB from Buchnera aphidicola subsp. Schizaphis graminum (strain Sg).